A 130-amino-acid chain; its full sequence is Holo-[acyl-carrier-protein] synthase (130 aa).

Mg(2+) is bound by residues Asp-8 and Glu-62.

This sequence belongs to the P-Pant transferase superfamily. AcpS family. Mg(2+) is required as a cofactor.

The protein localises to the cytoplasm. The catalysed reaction is apo-[ACP] + CoA = holo-[ACP] + adenosine 3',5'-bisphosphate + H(+). Transfers the 4'-phosphopantetheine moiety from coenzyme A to a Ser of acyl-carrier-protein. The protein is Holo-[acyl-carrier-protein] synthase of Acidovorax ebreus (strain TPSY) (Diaphorobacter sp. (strain TPSY)).